We begin with the raw amino-acid sequence, 257 residues long: Fimbrial assembly protein, serogroup E1 (257 aa).

This chain is Fimbrial assembly protein, serogroup E1 (fimB), found in Dichelobacter nodosus (Bacteroides nodosus).